Reading from the N-terminus, the 94-residue chain is Putative pterin-4-alpha-carbinolamine dehydratase (94 aa).

Belongs to the pterin-4-alpha-carbinolamine dehydratase family.

It catalyses the reaction (4aS,6R)-4a-hydroxy-L-erythro-5,6,7,8-tetrahydrobiopterin = (6R)-L-erythro-6,7-dihydrobiopterin + H2O. In Mycobacterium avium (strain 104), this protein is Putative pterin-4-alpha-carbinolamine dehydratase.